The chain runs to 534 residues: Membrane protein insertase YidC (534 aa).

5 helical membrane passes run 7-27 (IIAVVLSFIVLVGWGYLSEYM), 319-339 (AIDLGWFGFIARPLVTLLDFF), 342-362 (YVGNYGTAIILLTILIKLVFW), 413-433 (GGCLPMLVQIPVFFGLYQALL), and 493-513 (VMMFMPVVFTFLFLNFPSGLV).

This sequence belongs to the OXA1/ALB3/YidC family. Type 1 subfamily. Interacts with the Sec translocase complex via SecD. Specifically interacts with transmembrane segments of nascent integral membrane proteins during membrane integration.

The protein localises to the cell inner membrane. Its function is as follows. Required for the insertion and/or proper folding and/or complex formation of integral membrane proteins into the membrane. Involved in integration of membrane proteins that insert both dependently and independently of the Sec translocase complex, as well as at least some lipoproteins. Aids folding of multispanning membrane proteins. This Nitratidesulfovibrio vulgaris (strain ATCC 29579 / DSM 644 / CCUG 34227 / NCIMB 8303 / VKM B-1760 / Hildenborough) (Desulfovibrio vulgaris) protein is Membrane protein insertase YidC.